The sequence spans 65 residues: Diapause-specific peptide (65 aa).

A signal peptide spans 1–24; the sequence is MGAALKMTIFLLIVACAMIATTEA. Intrachain disulfides connect Cys-31/Cys-45, Cys-35/Cys-57, and Cys-46/Cys-64.

In terms of tissue distribution, highly expressed in the fat body.

It is found in the secreted. In terms of biological role, has antifungal activity against T.rubrum. Blocks voltage-dependent N-type calcium channels (Cav2.2 / CACNA1B). The sequence is that of Diapause-specific peptide from Gastrophysa atrocyanea (Leaf beetle).